We begin with the raw amino-acid sequence, 423 residues long: Glutamine synthetase, chloroplastic (423 aa).

The transit peptide at 1 to 51 (MAQAVVPAMQCRVGVKAAAGRVWSAGRTRTGRGGASPGFKVMAVSTGSTGV) directs the protein to the chloroplast. The GS beta-grasp domain maps to 70 to 150 (VIAEYIWVGG…VICDTYTPQG (81 aa)). The disordered stretch occupies residues 89-115 (RTISKPVEDPSELPKWNYDGSSTGQAP). Residues 154–423 (PTNKRHRAAQ…LAAKKLALKV (270 aa)) form the GS catalytic domain.

This sequence belongs to the glutamine synthetase family. Homooctamer.

Its subcellular location is the plastid. It is found in the chloroplast. The catalysed reaction is L-glutamate + NH4(+) + ATP = L-glutamine + ADP + phosphate + H(+). Functionally, the light-modulated chloroplast enzyme, encoded by a nuclear gene and expressed primarily in leaves, is responsible for the reassimilation of the ammonia generated by photorespiration. In Zea mays (Maize), this protein is Glutamine synthetase, chloroplastic (GLN2).